The sequence spans 170 residues: Adenine phosphoribosyltransferase (170 aa).

The protein belongs to the purine/pyrimidine phosphoribosyltransferase family. Homodimer.

It localises to the cytoplasm. It catalyses the reaction AMP + diphosphate = 5-phospho-alpha-D-ribose 1-diphosphate + adenine. Its pathway is purine metabolism; AMP biosynthesis via salvage pathway; AMP from adenine: step 1/1. Its function is as follows. Catalyzes a salvage reaction resulting in the formation of AMP, that is energically less costly than de novo synthesis. The polypeptide is Adenine phosphoribosyltransferase (Streptococcus pneumoniae (strain Hungary19A-6)).